The chain runs to 121 residues: Large ribosomal subunit protein bL12 (121 aa).

It belongs to the bacterial ribosomal protein bL12 family. As to quaternary structure, homodimer. Part of the ribosomal stalk of the 50S ribosomal subunit. Forms a multimeric L10(L12)X complex, where L10 forms an elongated spine to which 2 to 4 L12 dimers bind in a sequential fashion. Binds GTP-bound translation factors.

In terms of biological role, forms part of the ribosomal stalk which helps the ribosome interact with GTP-bound translation factors. Is thus essential for accurate translation. This is Large ribosomal subunit protein bL12 from Limosilactobacillus fermentum (strain NBRC 3956 / LMG 18251) (Lactobacillus fermentum).